A 97-amino-acid polypeptide reads, in one-letter code: Conotoxin Cal6.1b (97 aa).

Residues 1 to 22 form the signal peptide; that stretch reads MKLTTVLVVALLVLAACQFTVT. Residues 22 to 46 are disordered; that stretch reads TDNSGDDPENPSLRSAGENQNPDST. A propeptide spanning residues 23–68 is cleaved from the precursor; that stretch reads DNSGDDPENPSLRSAGENQNPDSTKTITAWATRDMTNMRRGLNRPS. Intrachain disulfides connect C71–C87, C78–C91, and C86–C96.

Belongs to the conotoxin O1 superfamily. In terms of tissue distribution, expressed by the venom duct.

It is found in the secreted. Functionally, probable neurotoxin with unknown target. Possibly targets ion channels. The sequence is that of Conotoxin Cal6.1b from Californiconus californicus (California cone).